A 542-amino-acid polypeptide reads, in one-letter code: 1,3-beta-glucanosyltransferase gas1 (542 aa).

The signal sequence occupies residues 1–19 (MKFSILSLAVAGLVGLAKA). Residue asparagine 35 is glycosylated (N-linked (GlcNAc...) asparagine). Cysteine 70 and cysteine 99 are disulfide-bonded. Tyrosine 88 contacts (1,3-beta-D-glucosyl)n. Asparagine 91 carries N-linked (GlcNAc...) asparagine glycosylation. (1,3-beta-D-glucosyl)n contacts are provided by asparagine 156 and glutamate 157. Glutamate 157 functions as the Proton donor in the catalytic mechanism. Asparagine 161 is a glycosylation site (N-linked (GlcNAc...) asparagine). 2 residues coordinate (1,3-beta-D-glucosyl)n: aspartate 198 and arginine 203. Disulfide bonds link cysteine 212–cysteine 345, cysteine 230–cysteine 261, cysteine 367–cysteine 419, cysteine 376–cysteine 439, and cysteine 395–cysteine 400. The N-linked (GlcNAc...) asparagine glycan is linked to asparagine 249. Catalysis depends on glutamate 258, which acts as the Nucleophile. An N-linked (GlcNAc...) asparagine glycan is attached at asparagine 279. Tyrosine 290 serves as a coordination point for (1,3-beta-D-glucosyl)n. Residues asparagine 406, asparagine 484, asparagine 502, and asparagine 509 are each glycosylated (N-linked (GlcNAc...) asparagine). Residues 490-515 (MSTSYTSGSGSSNSSGSSSNSSSKSS) are disordered. A lipid anchor (GPI-anchor amidated serine) is attached at serine 516. Residues 517-542 (GASSYNLNMVITFLSVVIGGTAVLFI) constitute a propeptide, removed in mature form.

The protein belongs to the glycosyl hydrolase 72 family. Post-translationally, the GPI-anchor is attached to the protein in the endoplasmic reticulum and serves to target the protein to the cell surface. There, the glucosamine-inositol phospholipid moiety is cleaved off and the GPI-modified mannoprotein is covalently attached via its lipidless GPI glycan remnant to the 1,6-beta-glucan of the outer cell wall layer.

Its subcellular location is the secreted. It is found in the cell wall. The protein localises to the membrane. Splits internally a 1,3-beta-glucan molecule and transfers the newly generated reducing end (the donor) to the non-reducing end of another 1,3-beta-glucan molecule (the acceptor) forming a 1,3-beta linkage, resulting in the elongation of 1,3-beta-glucan chains in the cell wall. The protein is 1,3-beta-glucanosyltransferase gas1 (gas1) of Schizosaccharomyces pombe (strain 972 / ATCC 24843) (Fission yeast).